The chain runs to 60 residues: Hemocyte defensin Cg-Defh1 (60 aa).

The first 17 residues, 1-17, serve as a signal peptide directing secretion; it reads LFTLVVLLMVSADMAFA. F19, G20, and C21 together coordinate beta-D-GlcNAc-(1-&gt;4)-Mur2Ac(oyl-L-Ala-gamma-D-Glu-L-Lys-D-Ala-D-Ala)-di-trans,octa-cis-undecaprenyl diphosphate. Disulfide bonds link C21–C42, C28–C51, C32–C53, and C37–C56. Residues 22 to 25 form a binds to membrane interface region; it reads PRDQ. Position 31 (H31) interacts with beta-D-GlcNAc-(1-&gt;4)-Mur2Ac(oyl-L-Ala-gamma-D-Glu-L-Lys-D-Ala-D-Ala)-di-trans,octa-cis-undecaprenyl diphosphate. Positions 43 to 49 are binds to membrane interface; that stretch reads DAVTLWL. C51 is a binding site for beta-D-GlcNAc-(1-&gt;4)-Mur2Ac(oyl-L-Ala-gamma-D-Glu-L-Lys-D-Ala-D-Ala)-di-trans,octa-cis-undecaprenyl diphosphate.

Belongs to the invertebrate defensin family. Expressed in hemocytes.

The protein localises to the secreted. It is found in the target cell membrane. Its function is as follows. Antibacterial peptide mostly active against Gram-positive bacteria. It acts by selectively inhibiting peptidoglycan biosynthesis through complex formation with the cell wall precursor lipid II (1:1 molar ratio) thus inhibiting cell wall synthesis. It does not disrupt cell membranes. Is noticeably less potent than Cg-Defh2 and Cg-Defm. Shows no or limited activities against Gram-negative bacteria. This is Hemocyte defensin Cg-Defh1 from Magallana gigas (Pacific oyster).